Reading from the N-terminus, the 278-residue chain is Transmembrane protein 41A-B (278 aa).

The first 23 residues, 1-23 (MRSIWGLIVLVAAATFYLYLLSA), serve as a signal peptide directing secretion. 5 consecutive transmembrane segments (helical) span residues 78–98 (GYVFILFCSAYLYKQSFAIPG), 101–121 (FLNMLSGALFGPLHGLIIACT), 164–184 (LFFFLLFLRFFPMTPNWFLNV), 191–211 (IPIPIFFFSILIGLIPYNFIC), and 230–250 (WFTLLQLLLIACVALLPGALI).

It belongs to the TMEM41 family.

It is found in the membrane. The protein is Transmembrane protein 41A-B of Danio rerio (Zebrafish).